The chain runs to 255 residues: Small ribosomal subunit protein eS1 (255 aa).

The segment covering 1–18 has biased composition (basic residues); it reads MAVGKNKRLSKGKKGLKK. The interval 1-20 is disordered; that stretch reads MAVGKNKRLSKGKKGLKKRV. At Ala-2 the chain carries N-acetylalanine; partial.

This sequence belongs to the eukaryotic ribosomal protein eS1 family. Component of the small ribosomal subunit. Mature ribosomes consist of a small (40S) and a large (60S) subunit. The 40S subunit contains about 33 different proteins and 1 molecule of RNA (18S). The 60S subunit contains about 49 different proteins and 3 molecules of RNA (25S, 5.8S and 5S).

It is found in the cytoplasm. In Coccidioides immitis (strain RS) (Valley fever fungus), this protein is Small ribosomal subunit protein eS1.